The sequence spans 349 residues: Methylthioribose-1-phosphate isomerase (349 aa).

Residues 49–51, arginine 93, and glutamine 201 contribute to the substrate site; that span reads RGA. The Proton donor role is filled by aspartate 242. 252 to 253 provides a ligand contact to substrate; the sequence is NK.

It belongs to the EIF-2B alpha/beta/delta subunits family. MtnA subfamily.

It carries out the reaction 5-(methylsulfanyl)-alpha-D-ribose 1-phosphate = 5-(methylsulfanyl)-D-ribulose 1-phosphate. The protein operates within amino-acid biosynthesis; L-methionine biosynthesis via salvage pathway; L-methionine from S-methyl-5-thio-alpha-D-ribose 1-phosphate: step 1/6. Catalyzes the interconversion of methylthioribose-1-phosphate (MTR-1-P) into methylthioribulose-1-phosphate (MTRu-1-P). The sequence is that of Methylthioribose-1-phosphate isomerase from Petrotoga mobilis (strain DSM 10674 / SJ95).